A 77-amino-acid polypeptide reads, in one-letter code: U8-lycotoxin-Ls1t (77 aa).

Residues 1-20 form the signal peptide; it reads MKLIIFTGLVLFAIVSLIEA. The propeptide occupies 21–26; that stretch reads QAENEK.

It belongs to the neurotoxin 19 (CSTX) family. 08 (U8-Lctx) subfamily. Post-translationally, contains 4 disulfide bonds. Expressed by the venom gland.

The protein localises to the secreted. The polypeptide is U8-lycotoxin-Ls1t (Lycosa singoriensis (Wolf spider)).